Consider the following 189-residue polypeptide: MNPVSLIFLAFAMSTDAFAAAIGKGSSLDRPRLSEALRTGIIFGVIEAITPLVGWLLGQAASQFVADWDHWIAFVLLVLLGLHMIHNGLRADHETEQEKPGQHSFWILAVTALATSIDALAVGVGLAFVDVNIFLAAGAIGLATMTMVTLGTMLGRALGAVTGKRAEMVGGVVLILVGATILYEHLSAA.

Helical transmembrane passes span 3-23 (PVSLIFLAFAMSTDAFAAAIG), 41-61 (IIFGVIEAITPLVGWLLGQAA), 65-85 (VADWDHWIAFVLLVLLGLHMI), 106-128 (WILAVTALATSIDALAVGVGLAF), 141-161 (GLATMTMVTLGTMLGRALGAV), and 168-188 (MVGGVVLILVGATILYEHLSA).

It belongs to the MntP (TC 9.B.29) family.

Its subcellular location is the cell inner membrane. Its function is as follows. Probably functions as a manganese efflux pump. The protein is Putative manganese efflux pump MntP of Pseudomonas aeruginosa (strain LESB58).